The following is a 167-amino-acid chain: NADH-quinone oxidoreductase subunit B (167 aa).

[4Fe-4S] cluster contacts are provided by C40, C41, C105, and C134.

The protein belongs to the complex I 20 kDa subunit family. In terms of assembly, NDH-1 is composed of 14 different subunits. Subunits NuoB, C, D, E, F, and G constitute the peripheral sector of the complex. Requires [4Fe-4S] cluster as cofactor.

It localises to the cell inner membrane. It carries out the reaction a quinone + NADH + 5 H(+)(in) = a quinol + NAD(+) + 4 H(+)(out). NDH-1 shuttles electrons from NADH, via FMN and iron-sulfur (Fe-S) centers, to quinones in the respiratory chain. The immediate electron acceptor for the enzyme in this species is believed to be ubiquinone. Couples the redox reaction to proton translocation (for every two electrons transferred, four hydrogen ions are translocated across the cytoplasmic membrane), and thus conserves the redox energy in a proton gradient. This is NADH-quinone oxidoreductase subunit B from Campylobacter jejuni subsp. jejuni serotype O:2 (strain ATCC 700819 / NCTC 11168).